Consider the following 861-residue polypeptide: Oleate activated transcription factor 3 (861 aa).

The zn(2)-C6 fungal-type DNA-binding region spans 19-47 (NCKKRKSKCDRTKPCGTCVRLGDVDSCVY). A compositionally biased stretch (polar residues) spans 52-61 (SGQPESSPSL). A disordered region spans residues 52–99 (SGQPESSPSLNDADPLRKQSTPAERISPGFIKKRRSSQTRQDEDHWQR).

It belongs to the OAF3 family.

The protein resides in the cytoplasm. Its subcellular location is the nucleus. The protein localises to the mitochondrion. Transcriptional inhibitor with a significantly increased number of target genes in response to oleate. The protein is Oleate activated transcription factor 3 (OAF3) of Saccharomyces cerevisiae (strain JAY291) (Baker's yeast).